Reading from the N-terminus, the 95-residue chain is Putative pterin-4-alpha-carbinolamine dehydratase (95 aa).

Belongs to the pterin-4-alpha-carbinolamine dehydratase family.

It carries out the reaction (4aS,6R)-4a-hydroxy-L-erythro-5,6,7,8-tetrahydrobiopterin = (6R)-L-erythro-6,7-dihydrobiopterin + H2O. The sequence is that of Putative pterin-4-alpha-carbinolamine dehydratase from Prochlorococcus marinus (strain NATL2A).